The following is a 533-amino-acid chain: Multicopy suppressor of sporulation protein msa1 (533 aa).

The disordered stretch occupies residues 30–68 (DIPPGSLSENDNSTTFIKPPLETASSSTPIPSSSSSGVL). Positions 36–45 (LSENDNSTTF) are enriched in polar residues. Residues 54 to 68 (SSSTPIPSSSSSGVL) show a composition bias toward low complexity. The RRM 1 domain maps to 79–158 (ACLFVASLNS…RHIRIERAKV (80 aa)). A disordered region spans residues 237–292 (YKKKGSSPFSPPNAHSRRRKSQGKDQSNTPVIKAPAPIPFSVSSDPPSTMGRSNSA). Positions 277 to 292 (SVSSDPPSTMGRSNSA) are enriched in polar residues. Positions 365-441 (YSIFVGQLDP…KPLRVEFRQL (77 aa)) constitute an RRM 2 domain.

It is found in the cytoplasm. Functionally, negative regulator of sexual differentiation. Acts by repressing the transcription of meiosis-inducing, ste11-regulated genes. The sequence is that of Multicopy suppressor of sporulation protein msa1 (msa1) from Schizosaccharomyces pombe (strain 972 / ATCC 24843) (Fission yeast).